We begin with the raw amino-acid sequence, 718 residues long: DNA ligase (718 aa).

NAD(+)-binding positions include 44-48 (DADYD), 93-94 (SL), and Glu-127. The N6-AMP-lysine intermediate role is filled by Lys-129. Positions 150, 186, 302, and 326 each coordinate NAD(+). Zn(2+)-binding residues include Cys-432, Cys-435, Cys-456, and Cys-462. Residues 640–718 (TAGSPVAGKT…EDQWLALISG (79 aa)) enclose the BRCT domain.

It belongs to the NAD-dependent DNA ligase family. LigA subfamily. It depends on Mg(2+) as a cofactor. Mn(2+) is required as a cofactor.

It catalyses the reaction NAD(+) + (deoxyribonucleotide)n-3'-hydroxyl + 5'-phospho-(deoxyribonucleotide)m = (deoxyribonucleotide)n+m + AMP + beta-nicotinamide D-nucleotide.. Its function is as follows. DNA ligase that catalyzes the formation of phosphodiester linkages between 5'-phosphoryl and 3'-hydroxyl groups in double-stranded DNA using NAD as a coenzyme and as the energy source for the reaction. It is essential for DNA replication and repair of damaged DNA. This Rhizobium johnstonii (strain DSM 114642 / LMG 32736 / 3841) (Rhizobium leguminosarum bv. viciae) protein is DNA ligase.